A 510-amino-acid polypeptide reads, in one-letter code: NAD(P)H-quinone oxidoreductase subunit 2 A, chloroplastic (510 aa).

Transmembrane regions (helical) follow at residues leucine 24–leucine 44, isoleucine 57–phenylalanine 77, isoleucine 99–isoleucine 119, methionine 124–cysteine 144, leucine 149–tyrosine 169, tyrosine 183–glycine 203, proline 227–alanine 247, tryptophan 295–isoleucine 315, methionine 323–aspartate 343, tyrosine 354–leucine 374, alanine 395–phenylalanine 415, leucine 418–leucine 438, and methionine 484–isoleucine 504.

This sequence belongs to the complex I subunit 2 family. NDH is composed of at least 16 different subunits, 5 of which are encoded in the nucleus.

It is found in the plastid. It localises to the chloroplast thylakoid membrane. It carries out the reaction a plastoquinone + NADH + (n+1) H(+)(in) = a plastoquinol + NAD(+) + n H(+)(out). It catalyses the reaction a plastoquinone + NADPH + (n+1) H(+)(in) = a plastoquinol + NADP(+) + n H(+)(out). In terms of biological role, NDH shuttles electrons from NAD(P)H:plastoquinone, via FMN and iron-sulfur (Fe-S) centers, to quinones in the photosynthetic chain and possibly in a chloroplast respiratory chain. The immediate electron acceptor for the enzyme in this species is believed to be plastoquinone. Couples the redox reaction to proton translocation, and thus conserves the redox energy in a proton gradient. This chain is NAD(P)H-quinone oxidoreductase subunit 2 A, chloroplastic, found in Ranunculus macranthus (Large buttercup).